We begin with the raw amino-acid sequence, 713 residues long: Cadherin-13 (713 aa).

A signal peptide spans 1-22 (MQPATPLVLCVLLSQVLLLTSA). Residues 23–138 (EDLDCTPGFQ…RTSPVPRQKR (116 aa)) constitute a propeptide that is removed on maturation. Residues Asn-52 and Asn-86 are each glycosylated (N-linked (GlcNAc...) asparagine). 5 Cadherin domains span residues 139-245 (SIVV…RPIF), 246-363 (REGP…SPKF), 364-477 (TKKE…SPVF), 478-585 (YPDP…APFI), and 584-694 (FIYP…AAGA). Positions 156–178 (PRDVGKVVDSDRPEGSKFRLTGK) are disordered. A compositionally biased stretch (basic and acidic residues) spans 158-172 (DVGKVVDSDRPEGSK). N-linked (GlcNAc...) asparagine glycans are attached at residues Asn-382, Asn-489, Asn-500, Asn-530, Asn-598, Asn-638, and Asn-671. Gly-693 carries the GPI-anchor amidated glycine lipid modification. A propeptide spans 694–713 (APHFSAATALLLSLFSLARL) (removed in mature form).

By contrast to classical cadherins, homodimerization in trans is not mediated by cadherin EC1 domain strand-swapping, but instead through a homophilic adhesive interface which joins two elongated EC1-EC2 domains through a region near their Ca2+-binding sites to form a tetrahedral, X-like shape.

Its subcellular location is the cell membrane. It localises to the cytoplasm. In terms of biological role, cadherins are calcium-dependent cell adhesion proteins. They preferentially interact with themselves in a homophilic manner in connecting cells; cadherins may thus contribute to the sorting of heterogeneous cell types. May act as a negative regulator of neural cell growth. The polypeptide is Cadherin-13 (CDH13) (Bos taurus (Bovine)).